Reading from the N-terminus, the 304-residue chain is UDP-N-acetylenolpyruvoylglucosamine reductase (304 aa).

Positions 33–213 (IGGPADIMVI…LEITRDLTER (181 aa)) constitute an FAD-binding PCMH-type domain. Arg-177 is an active-site residue. Ser-227 serves as the catalytic Proton donor. Glu-297 is a catalytic residue.

Belongs to the MurB family. Requires FAD as cofactor.

It is found in the cytoplasm. The catalysed reaction is UDP-N-acetyl-alpha-D-muramate + NADP(+) = UDP-N-acetyl-3-O-(1-carboxyvinyl)-alpha-D-glucosamine + NADPH + H(+). It functions in the pathway cell wall biogenesis; peptidoglycan biosynthesis. Its function is as follows. Cell wall formation. This is UDP-N-acetylenolpyruvoylglucosamine reductase from Alkaliphilus oremlandii (strain OhILAs) (Clostridium oremlandii (strain OhILAs)).